The following is a 290-amino-acid chain: Nucleoid occlusion protein (290 aa).

Residues 153 to 172 constitute a DNA-binding region (H-T-H motif); sequence EALAQRLGKGQSTIANKLRL.

The protein belongs to the ParB family.

It localises to the cytoplasm. The protein resides in the nucleoid. In terms of biological role, effects nucleoid occlusion by binding relatively nonspecifically to DNA and preventing the assembly of the division machinery in the vicinity of the nucleoid, especially under conditions that disturb the cell cycle. It helps to coordinate cell division and chromosome segregation by preventing the formation of the Z ring through the nucleoid, which would cause chromosome breakage. The polypeptide is Nucleoid occlusion protein (Bacillus cereus (strain AH187)).